The primary structure comprises 469 residues: MSFLTVSRLAPKLLNSKNATYFLVAARNASASSTNLKDVLADLIPKEQTRIKNFKQQYGKTNIGQITVDMVYGGMRGMKGLVYETSVLDPEEGIRFRGYSIPECQELLPKAPGGEEPLPEGLFWLLVTGQVPTEEQVNWVSKEWAKRAALPSHVVTMLDNFPTNLHPMSQFSAAITALNSESSFARAYSEGVHKTKYWEFIYEDSMDLIAKLPCIAAKIYRNLYREGSSIGAIDSNLDWSHNFTNMLGYSEPQFTELMRLYLTIHSDHEGGNVSAHTSHLVGSALSDPYLSFSAAMNGLAGPLHGLANQEVLVWLTALQKELGGEVSDERMRDYIWNTLKSGRVVPGYGHAVLRKTDPRYTCQREFALKHLPNDPMFKLVAQLYKIVPNVLLEQGKAKNPWPNVDAHSGVLLQYYGMTEMNYYTVLFGVSRALGVLAQLVWSRALGFPLERPKSMSTDGLMTLVGAKSG.

A mitochondrion-targeting transit peptide spans 1–30 (MSFLTVSRLAPKLLNSKNATYFLVAARNAS). Residues H304 and H350 contribute to the active site. R359 provides a ligand contact to oxaloacetate. Residue D405 is part of the active site. Positions 431 and 451 each coordinate oxaloacetate.

Belongs to the citrate synthase family. In terms of assembly, homodimer.

It is found in the mitochondrion matrix. The catalysed reaction is oxaloacetate + acetyl-CoA + H2O = citrate + CoA + H(+). It functions in the pathway carbohydrate metabolism; tricarboxylic acid cycle; isocitrate from oxaloacetate: step 1/2. Functionally, key enzyme of the Krebs tricarboxylic acid cycle which catalyzes the synthesis of citrate from acetyl coenzyme A and oxaloacetate. The sequence is that of Citrate synthase, mitochondrial (cs) from Xiphias gladius (Swordfish).